The following is a 240-amino-acid chain: Ornithine decarboxylase antizyme (240 aa).

Disordered stretches follow at residues 18-45 (RSEP…SSAG) and 69-95 (DHDR…SSEF). Positions 21–33 (PISSSNRATKRTI) are enriched in polar residues. Residues 34 to 43 (SSSSSSSSSS) are compositionally biased toward low complexity. The segment covering 69-84 (DHDRASPLKEYNRKTS) has biased composition (basic and acidic residues). The segment covering 85 to 95 (IDSTTTASSEF) has biased composition (polar residues).

Belongs to the ODC antizyme family. In terms of assembly, interacts with ODC1 and thereby sterically blocks ODC homodimerization. In terms of tissue distribution, preferentially expressed in adult female midguts.

Ornithine decarboxylase (ODC) antizyme protein that negatively regulates ODC activity and intracellular polyamine biosynthesis and uptake in response to increased intracellular polyamine levels. Binds to ODC monomers, inhibiting the assembly of the functional ODC homodimer, and targets the monomers for ubiquitin-independent proteolytic destruction by the 26S proteasome. This Aedes aegypti (Yellowfever mosquito) protein is Ornithine decarboxylase antizyme (Oda).